The sequence spans 391 residues: 3-ketoacyl-CoA thiolase, peroxisomal (391 aa).

Cys92 acts as the Acyl-thioester intermediate in catalysis. Catalysis depends on proton acceptor residues His335 and Cys366.

The protein belongs to the thiolase-like superfamily. Thiolase family. As to quaternary structure, homodimer.

The protein resides in the peroxisome. The catalysed reaction is an acyl-CoA + acetyl-CoA = a 3-oxoacyl-CoA + CoA. It participates in lipid metabolism; fatty acid metabolism. The polypeptide is 3-ketoacyl-CoA thiolase, peroxisomal (FOX3) (Encephalitozoon cuniculi (strain GB-M1) (Microsporidian parasite)).